The sequence spans 935 residues: Kinesin heavy chain (935 aa).

The Kinesin motor domain maps to 5 to 329 (NIKVVCRFRP…LRFGARAKSI (325 aa)). ATP is bound by residues 87–94 (GQTGSGKT) and 237–244 (GSEKVGKT). Positions 342–887 (AELKALLKKV…SQKSQNSLAA (546 aa)) form a coiled coil. Disordered stretches follow at residues 400–419 (APGF…TPVP) and 898–935 (RGNG…MNSR).

The protein belongs to the TRAFAC class myosin-kinesin ATPase superfamily. Kinesin family. Kinesin subfamily.

The protein localises to the cytoplasm. The protein resides in the cytoskeleton. Functionally, kinesin is a microtubule-associated force-producing protein that may play a role in organelle transport. Its motor activity is directed toward the microtubule's plus end. The speed of this motor is 4-5 times faster than its animal counterparts. The sequence is that of Kinesin heavy chain from Syncephalastrum racemosum (Filamentous fungus).